Consider the following 1829-residue polypeptide: Protein let-418 (1829 aa).

Composition is skewed to acidic residues over residues 1 to 17 and 25 to 39; these read MSTE…ESME and ATEE…EQGD. Disordered regions lie at residues 1 to 81 and 147 to 198; these read MSTE…YNST and MAAQ…SDQE. Positions 48–63 are enriched in basic residues; sequence RSSRKKGGKGGKKGSK. 2 PHD-type zinc fingers span residues 256–303 and 317–365; these read NDYC…CIEH and DEFC…CETV. 2 Chromo domains span residues 401–458 and 489–550; these read LKPP…PPEF and MQIH…NEDI. Residues 614 to 798 enclose the Helicase ATP-binding domain; it reads RHCWSNGTDA…FHLLNFLSKE (185 aa). 627-634 provides a ligand contact to ATP; the sequence is DEMGLGKT. The DEAH box signature appears at 749 to 752; the sequence is DEAH. Positions 930–1093 constitute a Helicase C-terminal domain; the sequence is LLQKMLRKLK…GKTMSKTELD (164 aa). Disordered regions lie at residues 1168–1198, 1234–1289, 1415–1495, and 1745–1829; these read ASYQ…EPDP, SENM…MPPL, AANG…ARPS, and NGER…PMET. Residues 1177–1186 show a composition bias toward acidic residues; the sequence is GQEEEEEEET. Composition is skewed to polar residues over residues 1234 to 1247 and 1418 to 1427; these read SENM…QNQT and GSAQGSSRST. Residues 1429–1444 are compositionally biased toward basic and acidic residues; the sequence is KPKEEPKEEPMEKEDA. Over residues 1446-1455 the composition is skewed to polar residues; the sequence is ETVNGATSEP. Residues 1474–1490 show a composition bias toward basic and acidic residues; the sequence is DEAKEPKEEPIETEKPR. Positions 1749-1773 are enriched in acidic residues; it reads MEEDEPVEAEEEEGVKQEPDDETQD. The segment covering 1792 to 1811 has biased composition (low complexity); that stretch reads DVPSTSAAAAVSSETAADAE. A compositionally biased stretch (acidic residues) spans 1819–1829; it reads APTDEPEPMET.

As to quaternary structure, component of the MEC (MEP-1-containing complex) complex that contains let-418, mep-1 and hda-1. Component of a NURD complex that contains let-418, hda-1, lin-40 and lin-53. Interacts with lin-1. Interacts with pie-1. Interacts with akir-1. In terms of tissue distribution, expressed in embryos and larva.

It localises to the nucleus. Functionally, part of a NuRD (Nucleosome Remodeling and Deacetylase) complex which is implicated in the synMuv B pathway that negatively regulates specification of vulval cell fate. This negative regulation is thought to be mediated via interaction with the promoter of lin-39, a key regulator in vulva development, and is dependent on the presence lin-1. Contributes to negative regulation of lag-2 which is expressed in the gut during larval development. Has a broad role in development. In association with akir-1, plays a role in regulating the transcription of antimicrobial peptide genes in response to fungal infection. The sequence is that of Protein let-418 from Caenorhabditis elegans.